The chain runs to 200 residues: dTTP/UTP pyrophosphatase (200 aa).

The Proton acceptor role is filled by Asp73.

It belongs to the Maf family. YhdE subfamily. A divalent metal cation is required as a cofactor.

Its subcellular location is the cytoplasm. It catalyses the reaction dTTP + H2O = dTMP + diphosphate + H(+). It carries out the reaction UTP + H2O = UMP + diphosphate + H(+). Functionally, nucleoside triphosphate pyrophosphatase that hydrolyzes dTTP and UTP. May have a dual role in cell division arrest and in preventing the incorporation of modified nucleotides into cellular nucleic acids. The polypeptide is dTTP/UTP pyrophosphatase (Chromohalobacter salexigens (strain ATCC BAA-138 / DSM 3043 / CIP 106854 / NCIMB 13768 / 1H11)).